We begin with the raw amino-acid sequence, 188 residues long: Ion-translocating oxidoreductase complex subunit B (188 aa).

The interval 1–26 (MMSLWIAIGALSTLALVSGVVLGFAA) is hydrophobic. Residues 32 to 91 (DEDPVVEQVDAILPQSQCGQCGYPGCRPYAEAVSTGGEKINKCAPGGEQVMLKLAELLAV) enclose the 4Fe-4S domain. Residues C49, C52, C57, C74, C117, C120, C123, C127, C147, C150, C153, and C157 each coordinate [4Fe-4S] cluster. 4Fe-4S ferredoxin-type domains follow at residues 108–137 (KVAF…GATR) and 138–167 (AMHT…MIPV).

This sequence belongs to the 4Fe4S bacterial-type ferredoxin family. RnfB subfamily. In terms of assembly, the complex is composed of six subunits: RnfA, RnfB, RnfC, RnfD, RnfE and RnfG. It depends on [4Fe-4S] cluster as a cofactor.

The protein localises to the cell inner membrane. Part of a membrane-bound complex that couples electron transfer with translocation of ions across the membrane. This chain is Ion-translocating oxidoreductase complex subunit B, found in Yersinia pestis bv. Antiqua (strain Antiqua).